A 78-amino-acid polypeptide reads, in one-letter code: DNA-directed RNA polymerase subunit omega (78 aa).

This sequence belongs to the RNA polymerase subunit omega family. As to quaternary structure, in cyanobacteria the RNAP catalytic core is composed of 2 alpha, 1 beta, 1 beta', 1 gamma and 1 omega subunit. When a sigma factor is associated with the core the holoenzyme is formed, which can initiate transcription.

It carries out the reaction RNA(n) + a ribonucleoside 5'-triphosphate = RNA(n+1) + diphosphate. Promotes RNA polymerase assembly. Latches the N- and C-terminal regions of the beta' subunit thereby facilitating its interaction with the beta and alpha subunits. The polypeptide is DNA-directed RNA polymerase subunit omega (Prochlorococcus marinus (strain MIT 9515)).